Here is a 370-residue protein sequence, read N- to C-terminus: Histidinol-phosphate aminotransferase 3 (370 aa).

At Lys-233 the chain carries N6-(pyridoxal phosphate)lysine.

This sequence belongs to the class-II pyridoxal-phosphate-dependent aminotransferase family. Histidinol-phosphate aminotransferase subfamily. In terms of assembly, homodimer. The cofactor is pyridoxal 5'-phosphate.

The enzyme catalyses L-histidinol phosphate + 2-oxoglutarate = 3-(imidazol-4-yl)-2-oxopropyl phosphate + L-glutamate. It participates in amino-acid biosynthesis; L-histidine biosynthesis; L-histidine from 5-phospho-alpha-D-ribose 1-diphosphate: step 7/9. This chain is Histidinol-phosphate aminotransferase 3, found in Burkholderia lata (strain ATCC 17760 / DSM 23089 / LMG 22485 / NCIMB 9086 / R18194 / 383).